The chain runs to 430 residues: Serine hydroxymethyltransferase (430 aa).

Position 120 to 122 (120 to 122 (GHI)) interacts with (6S)-5,6,7,8-tetrahydrofolate. An N6-(pyridoxal phosphate)lysine modification is found at Lys226.

This sequence belongs to the SHMT family. As to quaternary structure, homodimer. Pyridoxal 5'-phosphate is required as a cofactor.

Its subcellular location is the cytoplasm. It functions in the pathway amino-acid biosynthesis; glycine biosynthesis; glycine from L-serine: step 1/1. Catalyzes the reversible interconversion of serine and glycine with a modified folate serving as the one-carbon carrier. Also exhibits a pteridine-independent aldolase activity toward beta-hydroxyamino acids, producing glycine and aldehydes, via a retro-aldol mechanism. The sequence is that of Serine hydroxymethyltransferase from Pyrobaculum neutrophilum (strain DSM 2338 / JCM 9278 / NBRC 100436 / V24Sta) (Thermoproteus neutrophilus).